The following is a 454-amino-acid chain: MDKRIFGIETEFGISYSSPDSRPLAPEEVARYLFRKVVSWGRSSNVFLTNGSRLYLDVGSHPEYATAECDDLAQLIAHDRAGELILDDLVDEAQARLAAEGFNGTVYLFKNNTDSAGNSYGSHENYLIPRRGEFSRLAEILIPFLVTRQLIAGAGKILKTPHGATYAFSQRADHIWEGVSSATTRSRPIINTRDEPHADAEFYRRLHVIVGDSNMSETTALMKVGTVDLVLRMIEAGVIMRDMRMENPIRSIREISHDLSGRALVRLANGRQLTALEIQQEYLTKVTAFVRENGAHNPHVPLILDLWERTLKAIESGDTRSIDTEIDWAIKKKLMDSYRERHGLGLDAPRIAQLDLTYHDISRSRGLYYLLQSRGAVRRLVDDTVIKDAVDAPPQTTRAKLRGDFVRRAQELGRDYTVDWVHLKLNDRAHQTILCKDPFRSVDERVDALLDSMG.

Glu9 provides a ligand contact to Mg(2+). Arg53 is a binding site for ATP. Tyr55 contacts Mg(2+). Asp57 acts as the Proton acceptor in catalysis. Glu63 is a binding site for Mg(2+). 2 residues coordinate ATP: Thr66 and Trp420.

Belongs to the Pup ligase/Pup deamidase family. Pup-conjugating enzyme subfamily.

It carries out the reaction ATP + [prokaryotic ubiquitin-like protein]-L-glutamate + [protein]-L-lysine = ADP + phosphate + N(6)-([prokaryotic ubiquitin-like protein]-gamma-L-glutamyl)-[protein]-L-lysine.. It functions in the pathway protein degradation; proteasomal Pup-dependent pathway. The protein operates within protein modification; protein pupylation. In terms of biological role, catalyzes the covalent attachment of the prokaryotic ubiquitin-like protein modifier Pup to the proteasomal substrate proteins, thereby targeting them for proteasomal degradation. This tagging system is termed pupylation. The ligation reaction involves the side-chain carboxylate of the C-terminal glutamate of Pup and the side-chain amino group of a substrate lysine. In Pseudarthrobacter chlorophenolicus (strain ATCC 700700 / DSM 12829 / CIP 107037 / JCM 12360 / KCTC 9906 / NCIMB 13794 / A6) (Arthrobacter chlorophenolicus), this protein is Pup--protein ligase.